The following is a 140-amino-acid chain: Cytochrome B5 isoform D (140 aa).

One can recognise a Cytochrome b5 heme-binding domain in the interval 5 to 81; it reads GKVFTLSEVS…LDEYYVGDID (77 aa). Heme contacts are provided by histidine 40 and histidine 64. A helical membrane pass occupies residues 109-129; that stretch reads FVIKLLQFLVPLLILGLAFGI.

The protein belongs to the cytochrome b5 family. In terms of assembly, interacts with CER1, BI-1, FAH1 and FAH2. As to expression, expressed in roots, stems, leaves, flowers and siliques.

It is found in the endoplasmic reticulum membrane. Membrane bound hemoprotein which function as an electron carrier for several membrane bound oxygenases, including fatty acid desaturases. The polypeptide is Cytochrome B5 isoform D (Arabidopsis thaliana (Mouse-ear cress)).